Reading from the N-terminus, the 243-residue chain is 3-deoxy-manno-octulosonate cytidylyltransferase (243 aa).

The protein belongs to the KdsB family.

The protein resides in the cytoplasm. It carries out the reaction 3-deoxy-alpha-D-manno-oct-2-ulosonate + CTP = CMP-3-deoxy-beta-D-manno-octulosonate + diphosphate. The protein operates within nucleotide-sugar biosynthesis; CMP-3-deoxy-D-manno-octulosonate biosynthesis; CMP-3-deoxy-D-manno-octulosonate from 3-deoxy-D-manno-octulosonate and CTP: step 1/1. Its function is as follows. Activates KDO (a required 8-carbon sugar) for incorporation into bacterial lipopolysaccharide in Gram-negative bacteria. The sequence is that of 3-deoxy-manno-octulosonate cytidylyltransferase from Wigglesworthia glossinidia brevipalpis.